The following is an 849-amino-acid chain: Leucine--tRNA ligase (849 aa).

The short motif at 44–54 (PYPSGRIHMGH) is the 'HIGH' region element. A 'KMSKS' region motif is present at residues 620-624 (KMSKS). Lys-623 contacts ATP.

Belongs to the class-I aminoacyl-tRNA synthetase family.

The protein resides in the cytoplasm. It catalyses the reaction tRNA(Leu) + L-leucine + ATP = L-leucyl-tRNA(Leu) + AMP + diphosphate. The sequence is that of Leucine--tRNA ligase from Sphingopyxis alaskensis (strain DSM 13593 / LMG 18877 / RB2256) (Sphingomonas alaskensis).